A 248-amino-acid chain; its full sequence is Adenosylcobinamide-GDP ribazoletransferase (248 aa).

7 helical membrane-spanning segments follow: residues 24–44 (EINL…IGAW), 70–90 (IIIT…GLFS), 106–126 (VGAN…SLFL), 134–154 (IGWL…LLFA), 168–188 (IFLG…LVAL), 189–209 (GAFF…FTII), and 228–248 (AGGQ…WGLI).

Belongs to the CobS family. Requires Mg(2+) as cofactor.

The protein resides in the cell membrane. It carries out the reaction alpha-ribazole + adenosylcob(III)inamide-GDP = adenosylcob(III)alamin + GMP + H(+). It catalyses the reaction alpha-ribazole 5'-phosphate + adenosylcob(III)inamide-GDP = adenosylcob(III)alamin 5'-phosphate + GMP + H(+). The protein operates within cofactor biosynthesis; adenosylcobalamin biosynthesis; adenosylcobalamin from cob(II)yrinate a,c-diamide: step 7/7. Its function is as follows. Joins adenosylcobinamide-GDP and alpha-ribazole to generate adenosylcobalamin (Ado-cobalamin). Also synthesizes adenosylcobalamin 5'-phosphate from adenosylcobinamide-GDP and alpha-ribazole 5'-phosphate. The polypeptide is Adenosylcobinamide-GDP ribazoletransferase (Listeria monocytogenes serotype 4b (strain F2365)).